The chain runs to 305 residues: Glycine--tRNA ligase alpha subunit (305 aa).

Belongs to the class-II aminoacyl-tRNA synthetase family. Tetramer of two alpha and two beta subunits.

The protein localises to the cytoplasm. It carries out the reaction tRNA(Gly) + glycine + ATP = glycyl-tRNA(Gly) + AMP + diphosphate. The sequence is that of Glycine--tRNA ligase alpha subunit from Streptococcus pyogenes serotype M4 (strain MGAS10750).